Here is a 640-residue protein sequence, read N- to C-terminus: Spindle assembly abnormal protein 6 homolog (640 aa).

One can recognise a PISA domain in the interval 40–92 (VHKKDLAVRLTDDADPFFLYNLVISEEDFQSLKSQQGLLVDFSAFPQKFIDLL). The stretch at 154 to 475 (LARCLKCLKE…KQLLKTNENV (322 aa)) forms a coiled coil.

Nine homodimers form a cartwheel structure with an internal diameter of 23 nM and radial spokes connecting to the microtubule triplets.

It is found in the cytoplasm. The protein resides in the cytoskeleton. The protein localises to the microtubule organizing center. Its subcellular location is the centrosome. Functionally, central scaffolding component of the centrioles ensuring their 9-fold symmetry. Required for centrosome biogenesis and duplication: required both for mother-centriole-dependent centriole duplication and deuterosome-dependent centriole amplification in multiciliated cells. The sequence is that of Spindle assembly abnormal protein 6 homolog (SASS6) from Gallus gallus (Chicken).